The sequence spans 533 residues: Amidophosphoribosyltransferase (533 aa).

C2 acts as the Nucleophile in catalysis. In terms of domain architecture, Glutamine amidotransferase type-2 spans 2–238 (CGILALMLAD…PGECVFIRRS (237 aa)). Mg(2+) is bound by residues D383 and D384. The residue at position 506 (S506) is a Phosphoserine.

This sequence in the C-terminal section; belongs to the purine/pyrimidine phosphoribosyltransferase family. Mg(2+) is required as a cofactor.

The catalysed reaction is 5-phospho-beta-D-ribosylamine + L-glutamate + diphosphate = 5-phospho-alpha-D-ribose 1-diphosphate + L-glutamine + H2O. The protein operates within purine metabolism; IMP biosynthesis via de novo pathway; N(1)-(5-phospho-D-ribosyl)glycinamide from 5-phospho-alpha-D-ribose 1-diphosphate: step 1/2. In Schizosaccharomyces pombe (strain 972 / ATCC 24843) (Fission yeast), this protein is Amidophosphoribosyltransferase (ade4).